We begin with the raw amino-acid sequence, 410 residues long: Regulator of microtubule dynamics protein 2 (410 aa).

A helical membrane pass occupies residues 10–27; the sequence is IFGIMVGTAGISLLLLWY. At Ser51 the chain carries Phosphoserine. Positions 68 to 110 form a coiled coil; the sequence is FQERQLQILEKLNELLTNMEELKEEIRFLKETVPKLEEYIQDE. Ser121 carries the post-translational modification Phosphoserine. Residues 122 to 131 show a composition bias toward basic residues; the sequence is PQHRARKRRL. The interval 122 to 151 is disordered; the sequence is PQHRARKRRLPTIQSSATSNSSEEAESEGG. A Phosphothreonine modification is found at Thr139. The residue at position 152 (Tyr152) is a Phosphotyrosine. A phosphothreonine mark is found at Thr154 and Thr157.

The protein belongs to the RMDN family. Interacts with microtubules.

The protein localises to the membrane. Its subcellular location is the cytoplasm. The protein resides in the cytoskeleton. It localises to the spindle. It is found in the spindle pole. The sequence is that of Regulator of microtubule dynamics protein 2 (RMDN2) from Macaca fascicularis (Crab-eating macaque).